The sequence spans 319 residues: Non-homologous end joining protein Ku (319 aa).

The Ku domain maps to 10-188 (ISFGLVTVPI…PQGIELSEDE (179 aa)). The interval 252–319 (QSVAKAKASR…TTPKKPRRSA (68 aa)) is disordered. Residues 260 to 274 (SRGESGEADVHELPR) show a composition bias toward basic and acidic residues. A compositionally biased stretch (basic residues) spans 305–319 (TAAKKTTPKKPRRSA).

It belongs to the prokaryotic Ku family. Homodimer. Interacts with LigD.

With LigD forms a non-homologous end joining (NHEJ) DNA repair enzyme, which repairs dsDNA breaks with reduced fidelity. Binds linear dsDNA with 5'- and 3'- overhangs but not closed circular dsDNA nor ssDNA. Recruits and stimulates the ligase activity of LigD. In Streptomyces avermitilis (strain ATCC 31267 / DSM 46492 / JCM 5070 / NBRC 14893 / NCIMB 12804 / NRRL 8165 / MA-4680), this protein is Non-homologous end joining protein Ku.